A 394-amino-acid chain; its full sequence is MAKEKFDRSKEHANIGTIGHVDHGKTTLTAAIATVLAKNGDSVAQSYDMIDNAPEEKERGITINTSHIEYQTDKRHYAHVDCPGHADYVKNMITGAAQMDGGILVVSAADGPMPQTREHILLSRNVGVPALVVFLNKVDMVDDEELLELVEMEVRDLLSEYDFPGDDVPVIAGSALKALEGDAQYEEKILELMEAVDTYIPTPERDSDKPFMMPVEDVFSITGRGTVATGRVERGQIKVGEEVEIIGLHDTSKTTVTGVEMFRKLLDYAEAGDNIGALLRGVAREDVQRGQVLAAPGSITPHTEFKAEVYVLSKDEGGRHTPFFSNYRPQFYFRTTDVTGVVHLPEGTEMVMPGDNVEMTVELIAPIAIEDGTRFSIREGGRTVGSGVVTEIIK.

Residues 10-204 (KEHANIGTIG…AVDTYIPTPE (195 aa)) form the tr-type G domain. The G1 stretch occupies residues 19 to 26 (GHVDHGKT). 19–26 (GHVDHGKT) is a GTP binding site. Residue Thr26 coordinates Mg(2+). The G2 stretch occupies residues 60-64 (GITIN). The tract at residues 81-84 (DCPG) is G3. GTP is bound by residues 81–85 (DCPGH) and 136–139 (NKVD). Residues 136-139 (NKVD) are G4. Positions 174-176 (SAL) are G5.

It belongs to the TRAFAC class translation factor GTPase superfamily. Classic translation factor GTPase family. EF-Tu/EF-1A subfamily. In terms of assembly, monomer.

It localises to the cytoplasm. The enzyme catalyses GTP + H2O = GDP + phosphate + H(+). Its function is as follows. GTP hydrolase that promotes the GTP-dependent binding of aminoacyl-tRNA to the A-site of ribosomes during protein biosynthesis. This chain is Elongation factor Tu, found in Staphylococcus aureus (strain COL).